A 187-amino-acid polypeptide reads, in one-letter code: Large ribosomal subunit protein uL5 (187 aa).

The protein belongs to the universal ribosomal protein uL5 family. In terms of assembly, part of the 50S ribosomal subunit; part of the 5S rRNA/L5/L18/L25 subcomplex. Contacts the 5S rRNA and the P site tRNA. Forms a bridge to the 30S subunit in the 70S ribosome.

This is one of the proteins that bind and probably mediate the attachment of the 5S RNA into the large ribosomal subunit, where it forms part of the central protuberance. In the 70S ribosome it contacts protein S13 of the 30S subunit (bridge B1b), connecting the 2 subunits; this bridge is implicated in subunit movement. Contacts the P site tRNA; the 5S rRNA and some of its associated proteins might help stabilize positioning of ribosome-bound tRNAs. The polypeptide is Large ribosomal subunit protein uL5 (Brachyspira hyodysenteriae (strain ATCC 49526 / WA1)).